We begin with the raw amino-acid sequence, 617 residues long: Melatonin-related receptor (617 aa).

The Extracellular portion of the chain corresponds to Met1–Phe30. A helical membrane pass occupies residues Met31–Leu51. Topologically, residues Ala52–Asn64 are cytoplasmic. The chain crosses the membrane as a helical span at residues Ile65–Met85. Over Leu86–Met103 the chain is Extracellular. Residues Cys101 and Cys178 are joined by a disulfide bond. A helical transmembrane segment spans residues Val104 to Ile124. Topologically, residues Asn125–Arg143 are cytoplasmic. The helical transmembrane segment at Asn144–Met164 threads the bilayer. At Tyr165–Phe188 the chain is on the extracellular side. A helical membrane pass occupies residues Thr189–Val209. Topologically, residues Arg210–Met239 are cytoplasmic. The chain crosses the membrane as a helical span at residues Phe240–Val260. The Extracellular portion of the chain corresponds to Ala261–Asn273. A helical membrane pass occupies residues Trp274–Tyr294. At Gly295–Val617 the chain is on the cytoplasmic side. Disordered stretches follow at residues Ala340–Tyr438 and Ser464–Ser596. The segment covering His341–His353 has biased composition (basic and acidic residues). Polar residues predominate over residues Gly485–Lys500.

Belongs to the G-protein coupled receptor 1 family. In terms of assembly, homodimer, and heterodimer with MTNR1A and MTNR1B. Interacts with KAT5. Interacts with RTN4 isoform A/NOGO-A. Interacts with TGFBR1. As to quaternary structure, interacts with GTF2I. Cleaved by CAPN1 in a calcium-dependent manner. As to expression, hypothalamus and pituitary.

It is found in the cell membrane. Its subcellular location is the postsynaptic density. The protein resides in the nucleus. Its function is as follows. G protein-coupled receptor that plays a role in numerous physiological processes including regulation of energy metabolism, neurite outgrowth or cell migration. Promotes self-renewal and neuronal differentiation of neural progenitor cells through activation of the NOTCH and WNT/beta-catenin signaling pathways. Modulates the KAT5-dependent glucocorticoid receptor signaling by modulating KAT5 subcellular compartmentalisation. Also plays a role in the activation TGFBR1 in the absence of TGFBR2 by interfering with FKBP1A binding to TGFBR1, leading to induction of both canonical and non-canonical SMAD signaling pathways resulting in inhibition of proliferation or promotion of migration. Functionally, upon cleavage by CAPN1, functions as a scaffold in the nucleus for interacting partners such as GTF2I to promote FOS promoter activation. This Homo sapiens (Human) protein is Melatonin-related receptor (GPR50).